A 129-amino-acid polypeptide reads, in one-letter code: MDKKAIFDSVSNMEEQIGELYQQLGDLKTNLGEMLEENNRLNLENEHLRRRLSLTDEATPEPKAEIEAEHGVMAPNRKEAMQQMIELGEGYDNLVQLYKEGFHVCNVHFGSPRGNDEDCLFCLSLLNKK.

Residues His103, Cys105, Cys119, and Cys122 each contribute to the Zn(2+) site.

It belongs to the YabA family. As to quaternary structure, homotetramer. Interacts with both DnaA and DnaN, acting as a bridge between these two proteins. The cofactor is Zn(2+).

It is found in the cytoplasm. The protein resides in the nucleoid. Functionally, involved in control of chromosome replication initiation. Inhibits the cooperative binding of DnaA to the oriC region, thus negatively regulating initiation of chromosome replication. Inhibits the ability of DnaA-ATP to form a helix on DNA; does not disassemble preformed DnaA-DNA helices. Decreases the residence time of DnaA on the chromosome at its binding sites (oriC, replication forks and promoter-binding sites). Tethers DnaA to the replication machinery via the DNA polymerase beta sliding clamp subunit (dnaN). Associates with oriC and other DnaA targets on the chromosome in a DnaA-dependent manner. The sequence is that of Replication initiation control protein YabA from Listeria monocytogenes serotype 4b (strain CLIP80459).